The chain runs to 264 residues: Phosphonoacetaldehyde hydrolase (264 aa).

The Nucleophile role is filled by Asp9. Residues Asp9 and Ala11 each contribute to the Mg(2+) site. Residue Lys50 is the Schiff-base intermediate with substrate of the active site. Asp183 is a binding site for Mg(2+).

It belongs to the HAD-like hydrolase superfamily. PhnX family. Homodimer. It depends on Mg(2+) as a cofactor.

The enzyme catalyses phosphonoacetaldehyde + H2O = acetaldehyde + phosphate + H(+). Its function is as follows. Involved in phosphonate degradation. This Bacillus cereus (strain ATCC 10987 / NRS 248) protein is Phosphonoacetaldehyde hydrolase.